The primary structure comprises 353 residues: Guanine nucleotide-binding protein G(q) subunit alpha (353 aa).

Residues Cys-3 and Cys-4 are each lipidated (S-palmitoyl cysteine). Residues 32–353 (RELKLLLLGT…QLNLKEYNLV (322 aa)) form the G-alpha domain. Residues 35–48 (KLLLLGTGESGKST) are G1 motif. GTP is bound by residues 40–47 (GTGESGKS), 174–180 (LRVRVPT), 199–203 (DVGGQ), 268–271 (NKKD), and Ala-325. Positions 47 and 180 each coordinate Mg(2+). Positions 172–180 (DILRVRVPT) are G2 motif. The segment at 195–204 (FRMVDVGGQR) is G3 motif. The G4 motif stretch occupies residues 264–271 (ILFLNKKD). Positions 323–328 (TCATDT) are G5 motif.

Belongs to the G-alpha family. G(q) subfamily. As to quaternary structure, g proteins are composed of 3 units; alpha, beta and gamma. The alpha chain contains the guanine nucleotide binding site.

Its function is as follows. Guanine nucleotide-binding proteins (G proteins) are involved as modulators or transducers in various transmembrane signaling systems. The chain is Guanine nucleotide-binding protein G(q) subunit alpha (SCGQA) from Mizuhopecten yessoensis (Japanese scallop).